The following is a 55-amino-acid chain: Antiviral protein GAP-31 (55 aa).

The segment at 29–55 is disordered; the sequence is KPEGNSHGIPSLRKSSDDPGSSFVVAG.

This sequence belongs to the ribosome-inactivating protein family. Type 1 RIP subfamily.

The enzyme catalyses Endohydrolysis of the N-glycosidic bond at one specific adenosine on the 28S rRNA.. In terms of biological role, single-chain ribosome-inactivating protein, possessing high antiviral potency and low toxicity to normal cells in culture and to intact animals. Capable of inhibiting HIV-1 infection and replication. This Suregada multiflora (False lime) protein is Antiviral protein GAP-31.